Consider the following 575-residue polypeptide: Proline--tRNA ligase (575 aa).

It belongs to the class-II aminoacyl-tRNA synthetase family. ProS type 1 subfamily. Homodimer.

The protein localises to the cytoplasm. It catalyses the reaction tRNA(Pro) + L-proline + ATP = L-prolyl-tRNA(Pro) + AMP + diphosphate. Its function is as follows. Catalyzes the attachment of proline to tRNA(Pro) in a two-step reaction: proline is first activated by ATP to form Pro-AMP and then transferred to the acceptor end of tRNA(Pro). As ProRS can inadvertently accommodate and process non-cognate amino acids such as alanine and cysteine, to avoid such errors it has two additional distinct editing activities against alanine. One activity is designated as 'pretransfer' editing and involves the tRNA(Pro)-independent hydrolysis of activated Ala-AMP. The other activity is designated 'posttransfer' editing and involves deacylation of mischarged Ala-tRNA(Pro). The misacylated Cys-tRNA(Pro) is not edited by ProRS. The protein is Proline--tRNA ligase of Solidesulfovibrio magneticus (strain ATCC 700980 / DSM 13731 / RS-1) (Desulfovibrio magneticus).